The primary structure comprises 228 residues: UPF0758 protein H16_A3033 (228 aa).

The MPN domain maps to 102–224; it reads GFDGPAAVRN…IRSLADCCDR (123 aa). Zn(2+) contacts are provided by His-173, His-175, and Asp-186. The short motif at 173–186 is the JAMM motif element; that stretch reads HNHPRGTTAPSQSD.

It belongs to the UPF0758 family.

This is UPF0758 protein H16_A3033 from Cupriavidus necator (strain ATCC 17699 / DSM 428 / KCTC 22496 / NCIMB 10442 / H16 / Stanier 337) (Ralstonia eutropha).